Reading from the N-terminus, the 325-residue chain is Serine/threonine-protein kinase CtkA (325 aa).

ATP is bound by residues 21-24, Lys37, Gln72, and 88-90; these read NGNK and KDF. 2 residues coordinate Mg(2+): Asn160 and Asp179. ATP is bound at residue Asp179. The interval 296–325 is disordered; sequence QHKQAHSNPYDNADDLDNSNEYTPTPKRRR.

Post-translationally, autophosphorylates on either Thr-3 or Thr-7.

It localises to the secreted. The protein resides in the host cytoplasm. Its subcellular location is the host cytosol. It is found in the host nucleus. The catalysed reaction is L-seryl-[protein] + ATP = O-phospho-L-seryl-[protein] + ADP + H(+). It catalyses the reaction L-threonyl-[protein] + ATP = O-phospho-L-threonyl-[protein] + ADP + H(+). Its function is as follows. Virulence factor acting as a pro-inflammatory protein that induces the secretion of the pro-inflammatory cytokines TNF-alpha (tumor necrosis factor-alpha) and IL-8 (interleukin-8) from human macrophages, as well as enhanced translocation of the transcription factor NF-kappa-B complex in macrophages. Is a kinase capable of autophosphorylating itself at a threonine residue near the N-terminus. Also leads to enhanced phosphorylation of the NF-kappa-B p65 subunit (RELA) at 'Ser-276' in human epithelial cancer cells; its kinase activity is required for this enhanced phosphorylation that up-regulates NF-kappa-B activity, but it does not directly phosphorylate this protein. Thus, the kinase activity of CtkA may play an important role in the induction of host inflammatory responses during H.pylori infection. This chain is Serine/threonine-protein kinase CtkA (ctkA), found in Helicobacter pylori (strain J99 / ATCC 700824) (Campylobacter pylori J99).